The chain runs to 477 residues: Probable glycine dehydrogenase (decarboxylating) subunit 2 (477 aa).

Lys-264 is subject to N6-(pyridoxal phosphate)lysine.

Belongs to the GcvP family. C-terminal subunit subfamily. The glycine cleavage system is composed of four proteins: P, T, L and H. In this organism, the P 'protein' is a heterodimer of two subunits. The cofactor is pyridoxal 5'-phosphate.

It catalyses the reaction N(6)-[(R)-lipoyl]-L-lysyl-[glycine-cleavage complex H protein] + glycine + H(+) = N(6)-[(R)-S(8)-aminomethyldihydrolipoyl]-L-lysyl-[glycine-cleavage complex H protein] + CO2. In terms of biological role, the glycine cleavage system catalyzes the degradation of glycine. The P protein binds the alpha-amino group of glycine through its pyridoxal phosphate cofactor; CO(2) is released and the remaining methylamine moiety is then transferred to the lipoamide cofactor of the H protein. This Fervidobacterium nodosum (strain ATCC 35602 / DSM 5306 / Rt17-B1) protein is Probable glycine dehydrogenase (decarboxylating) subunit 2.